The chain runs to 419 residues: Maltoporin 2 (419 aa).

The signal sequence occupies residues 1–23; it reads MKTSLRTLSVALAAALVSPSVLA.

The protein belongs to the porin LamB (TC 1.B.3) family. Homotrimer formed of three 18-stranded antiparallel beta-barrels, containing three independent channels.

It localises to the cell outer membrane. The catalysed reaction is beta-maltose(in) = beta-maltose(out). Involved in the transport of maltose and maltodextrins. This Yersinia pestis bv. Antiqua (strain Antiqua) protein is Maltoporin 2.